Consider the following 546-residue polypeptide: Membrane protein insertase YidC (546 aa).

The helical transmembrane segment at leucine 6–lysine 26 threads the bilayer. The interval proline 31–alanine 56 is disordered. The span at alanine 37–alanine 56 shows a compositional bias: low complexity. The next 4 helical transmembrane spans lie at leucine 351 to tyrosine 371, leucine 425 to valine 445, tryptophan 465 to leucine 482, and isoleucine 494 to valine 514.

This sequence belongs to the OXA1/ALB3/YidC family. Type 1 subfamily. Interacts with the Sec translocase complex via SecD. Specifically interacts with transmembrane segments of nascent integral membrane proteins during membrane integration.

It is found in the cell inner membrane. Functionally, required for the insertion and/or proper folding and/or complex formation of integral membrane proteins into the membrane. Involved in integration of membrane proteins that insert both dependently and independently of the Sec translocase complex, as well as at least some lipoproteins. Aids folding of multispanning membrane proteins. The chain is Membrane protein insertase YidC from Thiobacillus denitrificans (strain ATCC 25259 / T1).